A 39-amino-acid chain; its full sequence is MERNPNPNNLPVELNRTSLYLGLLIVFTTGILFSSYFFN.

Residues 18–38 form a helical membrane-spanning segment; the sequence is SLYLGLLIVFTTGILFSSYFF.

It belongs to the PsbL family. In terms of assembly, PSII is composed of 1 copy each of membrane proteins PsbA, PsbB, PsbC, PsbD, PsbE, PsbF, PsbH, PsbI, PsbJ, PsbK, PsbL, PsbM, PsbT, PsbX, PsbY, PsbZ, Psb30/Ycf12, peripheral proteins PsbO, CyanoQ (PsbQ), PsbU, PsbV and a large number of cofactors. It forms dimeric complexes.

It localises to the cellular thylakoid membrane. Functionally, one of the components of the core complex of photosystem II (PSII). PSII is a light-driven water:plastoquinone oxidoreductase that uses light energy to abstract electrons from H(2)O, generating O(2) and a proton gradient subsequently used for ATP formation. It consists of a core antenna complex that captures photons, and an electron transfer chain that converts photonic excitation into a charge separation. This subunit is found at the monomer-monomer interface and is required for correct PSII assembly and/or dimerization. This chain is Photosystem II reaction center protein L, found in Synechococcus sp. (strain CC9311).